We begin with the raw amino-acid sequence, 129 residues long: Glycine cleavage system H protein (129 aa).

The 83-residue stretch at S24–M106 folds into the Lipoyl-binding domain. The residue at position 65 (K65) is an N6-lipoyllysine.

The protein belongs to the GcvH family. As to quaternary structure, the glycine cleavage system is composed of four proteins: P, T, L and H. (R)-lipoate is required as a cofactor.

Its function is as follows. The glycine cleavage system catalyzes the degradation of glycine. The H protein shuttles the methylamine group of glycine from the P protein to the T protein. The chain is Glycine cleavage system H protein from Shewanella sediminis (strain HAW-EB3).